The sequence spans 83 residues: DNA-directed RNA polymerase subunit omega (83 aa).

The protein belongs to the RNA polymerase subunit omega family. The RNAP catalytic core consists of 2 alpha, 1 beta, 1 beta' and 1 omega subunit. When a sigma factor is associated with the core the holoenzyme is formed, which can initiate transcription.

It carries out the reaction RNA(n) + a ribonucleoside 5'-triphosphate = RNA(n+1) + diphosphate. Functionally, promotes RNA polymerase assembly. Latches the N- and C-terminal regions of the beta' subunit thereby facilitating its interaction with the beta and alpha subunits. The protein is DNA-directed RNA polymerase subunit omega of Chromohalobacter salexigens (strain ATCC BAA-138 / DSM 3043 / CIP 106854 / NCIMB 13768 / 1H11).